A 472-amino-acid polypeptide reads, in one-letter code: Eukaryotic translation initiation factor 2 subunit 3 (472 aa).

The residue at position 2 (alanine 2) is an N-acetylalanine. Serine 16 bears the Phosphoserine mark. The region spanning 39 to 248 is the tr-type G domain; that stretch reads QATINIGTIG…IVKKIPVPPR (210 aa). Residues 48 to 55 form a G1 region; that stretch reads GHVAHGKS. A GTP-binding site is contributed by 51 to 56; it reads AHGKST. The tract at residues 76 to 80 is G2; it reads NITIK. A G3 region spans residues 134-137; that stretch reads DCPG. GTP is bound by residues 190–193 and 225–227; these read NKID and SAQ. The G4 stretch occupies residues 190–193; that stretch reads NKID. The interval 225 to 227 is G5; that stretch reads SAQ. An interacts with CDC123 region spans residues 457–469; sequence GQIRRGVTIKPTV.

The protein belongs to the TRAFAC class translation factor GTPase superfamily. Classic translation factor GTPase family. EIF2G subfamily. In terms of assembly, eukaryotic translation initiation factor 2 eIF2 is a heterotrimeric complex composed of an alpha (EIF2S1), a beta (EIF2S2) and a gamma (EIF2S3) chain. eIF2 is member of the 43S pre-initiation complex (43S PIC). Interacts (via C-terminus) with CDC123; the interaction is direct.

The protein localises to the cytoplasm. It localises to the cytosol. The enzyme catalyses GTP + H2O = GDP + phosphate + H(+). In terms of biological role, member of the eIF2 complex that functions in the early steps of protein synthesis by forming a ternary complex with GTP and initiator tRNA. This complex binds to a 40S ribosomal subunit, followed by mRNA binding to form the 43S pre-initiation complex (43S PIC). Junction of the 60S ribosomal subunit to form the 80S initiation complex is preceded by hydrolysis of the GTP bound to eIF2 and release of an eIF2-GDP binary complex. In order for eIF2 to recycle and catalyze another round of initiation, the GDP bound to eIF2 must exchange with GTP by way of a reaction catalyzed by eIF-2B. The chain is Eukaryotic translation initiation factor 2 subunit 3 (EIF2S3) from Pongo abelii (Sumatran orangutan).